We begin with the raw amino-acid sequence, 163 residues long: MLTKIGLYTGSFDPVTNGHLDIVKRASGLFDQIYVGIFDNPTKKSYFKLEVRKAMLTQALADFTNVIVVTSHERLAIDVAKELRVTHLIRGLRNATDFEYEENLEYFNHLLAPNIETVYLISRNKWQALSSSRVRELIHFQSSLEGLVPQSVIAQVEKMNEKT.

Serine 11 contributes to the substrate binding site. ATP contacts are provided by residues 11 to 12 and histidine 19; that span reads SF. The substrate site is built by lysine 43, alanine 76, and arginine 90. Residues 91 to 93, glutamate 101, and 126 to 132 each bind ATP; these read GLR and WQALSSS.

Belongs to the bacterial CoaD family. Homohexamer. The cofactor is Mg(2+).

It is found in the cytoplasm. The enzyme catalyses (R)-4'-phosphopantetheine + ATP + H(+) = 3'-dephospho-CoA + diphosphate. Its pathway is cofactor biosynthesis; coenzyme A biosynthesis; CoA from (R)-pantothenate: step 4/5. Functionally, reversibly transfers an adenylyl group from ATP to 4'-phosphopantetheine, yielding dephospho-CoA (dPCoA) and pyrophosphate. In Streptococcus pyogenes serotype M6 (strain ATCC BAA-946 / MGAS10394), this protein is Phosphopantetheine adenylyltransferase.